Consider the following 356-residue polypeptide: Tyrosine recombinase XerS (356 aa).

The Core-binding (CB) domain maps to 16–121 (IMPWYVLEYY…ALSSLYKYLT (106 aa)). In terms of domain architecture, Tyr recombinase spans 169 to 354 (GFLTYIDQEY…VNDEQKNALD (186 aa)). Residues R210, K234, H306, R309, and H332 contribute to the active site. Y341 (O-(3'-phospho-DNA)-tyrosine intermediate) is an active-site residue.

It belongs to the 'phage' integrase family. XerS subfamily.

It localises to the cytoplasm. FtsK is required for recombination. Site-specific tyrosine recombinase, which acts by catalyzing the cutting and rejoining of the recombining DNA molecules. Essential to convert dimers of the bacterial chromosome into monomers to permit their segregation at cell division. The chain is Tyrosine recombinase XerS from Streptococcus pneumoniae (strain Hungary19A-6).